The following is a 518-amino-acid chain: 2-isopropylmalate synthase (518 aa).

The Pyruvate carboxyltransferase domain maps to 5-267 (VIIFDTTLRD…STNIKHKEIY (263 aa)). Mn(2+) is bound by residues D14, H202, H204, and N238. A regulatory domain region spans residues 392–518 (SLSFFSVQSI…KLKTLKKVNN (127 aa)).

This sequence belongs to the alpha-IPM synthase/homocitrate synthase family. LeuA type 1 subfamily. Homodimer. Mn(2+) serves as cofactor.

It localises to the cytoplasm. It carries out the reaction 3-methyl-2-oxobutanoate + acetyl-CoA + H2O = (2S)-2-isopropylmalate + CoA + H(+). Its pathway is amino-acid biosynthesis; L-leucine biosynthesis; L-leucine from 3-methyl-2-oxobutanoate: step 1/4. Functionally, catalyzes the condensation of the acetyl group of acetyl-CoA with 3-methyl-2-oxobutanoate (2-ketoisovalerate) to form 3-carboxy-3-hydroxy-4-methylpentanoate (2-isopropylmalate). This chain is 2-isopropylmalate synthase, found in Buchnera aphidicola subsp. Schizaphis graminum (strain Sg).